We begin with the raw amino-acid sequence, 153 residues long: Pheromone-binding protein Gp-9 (153 aa).

Residues 1-19 (MKTFVLHIFIFALVAFASA) form the signal peptide. Intrachain disulfides connect cysteine 37/cysteine 77, cysteine 73/cysteine 129, and cysteine 118/cysteine 138.

The protein belongs to the PBP/GOBP family. As to quaternary structure, homodimer.

It localises to the secreted. Its function is as follows. Colony queen number, a major feature of social organization, is associated with worker genotype for Gp-9. Colonies are headed by either a single reproductive queen (monogyne form) or multiple queens (polygyne form). Differences in worker Gp-9 genotypes between social forms may cause differences in workers' abilities to recognize queens and regulate their numbers. The polypeptide is Pheromone-binding protein Gp-9 (Solenopsis sp. (strain B0-153) (Fire ant)).